The sequence spans 305 residues: tRNA-splicing endonuclease (305 aa).

Active-site residues include tyrosine 246, histidine 257, and lysine 287.

The protein belongs to the tRNA-intron endonuclease family. Archaeal long subfamily. Homodimer.

The enzyme catalyses pretRNA = a 3'-half-tRNA molecule with a 5'-OH end + a 5'-half-tRNA molecule with a 2',3'-cyclic phosphate end + an intron with a 2',3'-cyclic phosphate and a 5'-hydroxyl terminus.. In terms of biological role, endonuclease that removes tRNA introns. Cleaves pre-tRNA at the 5'- and 3'-splice sites to release the intron. The products are an intron and two tRNA half-molecules bearing 2',3' cyclic phosphate and 5'-OH termini. Recognizes a pseudosymmetric substrate in which 2 bulged loops of 3 bases are separated by a stem of 4 bp. This chain is tRNA-splicing endonuclease, found in Archaeoglobus fulgidus (strain ATCC 49558 / DSM 4304 / JCM 9628 / NBRC 100126 / VC-16).